A 144-amino-acid chain; its full sequence is Small polypeptide DEVIL 18 (144 aa).

The segment covering S30–S58 has biased composition (low complexity). A disordered region spans residues S30–D89. A helical membrane pass occupies residues P42–S58. Residues A68–T84 are compositionally biased toward polar residues. Positions S108–K139 are required for DVL/RTFL small polypeptide activity.

This sequence belongs to the DVL/RTFL small polypeptides family.

The protein localises to the cell membrane. Small polypeptide acting as a regulatory molecule which coordinates cellular responses required for differentiation, growth and development, probably by restricting polar cell proliferation in lateral organs and coordinating socket cell recruitment and differentiation at trichome sites. The chain is Small polypeptide DEVIL 18 from Arabidopsis thaliana (Mouse-ear cress).